The primary structure comprises 704 residues: MRSLFASTGRGLEELLKTELEHLGAQSCQITQGGVYFRADDKTMYQSLLWSRLASRIMLPLNEFNVYSDLDLYLGVQAIDWSEVFTVNHTFAIHFNGTNDVIRNSQYGALKAKDAIVDSFQRKIGQRPDVAKQSPDIRLTIHLHKEKASLSLDLSGDGLHQRGYRDLTGQAPLKENLAAAIIMRSGWKTDTPLIDPMCGSGTLLIEAAMMATDCAPALNRVHWGFRHWLGHNEALWKEVTHEAFARFREGKKNTQARFYGFDVDKRVLDMARANARRADVADLITFTQGDAAKLTNPVSTGVKGTIISNPPYGERLESEPALIALHSQLGRAVKAHFPGWRLSLFSASPELLSCIQLRAEREFKAKNGPLDCVQKNYLLSETPSTINTRLAEDFANRLRKNEKKLAKWAKQQQIECYRLYDADLPEYNVAVDRYGEKVVIQEYAPPKTINEHKARQRLFDVISATMEVLALRSDQLILKTRQRQKGKQQYEKMAEKGDFFLVDEFGAKFWVNLTDYLDTGLFLDHRIARKMLGEMSKGKDFLNLFAYTGSASVHAGLGGAKSTTTVDMSRTYLEWAEKNFQANGLSGRQHRLMQADCLQWLSQSNEQFDVIFIDPPTFSNSKRMENTFDVQRDHIELMKHLKRLLRKGGTIMFSNNKRGFKMDHEALANIGLTAKEITQKTLSQDFARNRQIHNCWLLNHAGEE.

Residues 43-154 enclose the THUMP domain; that stretch reads TMYQSLLWSR…KEKASLSLDL (112 aa).

Belongs to the methyltransferase superfamily. RlmKL family.

It localises to the cytoplasm. The catalysed reaction is guanosine(2445) in 23S rRNA + S-adenosyl-L-methionine = N(2)-methylguanosine(2445) in 23S rRNA + S-adenosyl-L-homocysteine + H(+). It catalyses the reaction guanosine(2069) in 23S rRNA + S-adenosyl-L-methionine = N(2)-methylguanosine(2069) in 23S rRNA + S-adenosyl-L-homocysteine + H(+). Its function is as follows. Specifically methylates the guanine in position 2445 (m2G2445) and the guanine in position 2069 (m7G2069) of 23S rRNA. The sequence is that of Ribosomal RNA large subunit methyltransferase K/L from Proteus mirabilis (strain HI4320).